The sequence spans 69 residues: Large ribosomal subunit protein bL31 (69 aa).

4 residues coordinate Zn(2+): Cys17, Cys19, Cys37, and Cys40.

It belongs to the bacterial ribosomal protein bL31 family. Type A subfamily. Part of the 50S ribosomal subunit. It depends on Zn(2+) as a cofactor.

Binds the 23S rRNA. The chain is Large ribosomal subunit protein bL31 from Caldicellulosiruptor bescii (strain ATCC BAA-1888 / DSM 6725 / KCTC 15123 / Z-1320) (Anaerocellum thermophilum).